The sequence spans 679 residues: Methionine--tRNA ligase (679 aa).

Residues 12 to 22 (PYANGAIHLGH) carry the 'HIGH' region motif. Zn(2+) is bound by residues Cys143, Cys146, Cys156, and Cys159. The 'KMSKS' region motif lies at 328–332 (KMSKS). Lys331 contributes to the ATP binding site. Residues 577 to 679 (DFAKLDLRVA…EGIRPGMQVK (103 aa)) enclose the tRNA-binding domain.

Belongs to the class-I aminoacyl-tRNA synthetase family. MetG type 1 subfamily. As to quaternary structure, homodimer. Zn(2+) is required as a cofactor.

It is found in the cytoplasm. The catalysed reaction is tRNA(Met) + L-methionine + ATP = L-methionyl-tRNA(Met) + AMP + diphosphate. In terms of biological role, is required not only for elongation of protein synthesis but also for the initiation of all mRNA translation through initiator tRNA(fMet) aminoacylation. The chain is Methionine--tRNA ligase from Actinobacillus pleuropneumoniae serotype 5b (strain L20).